The chain runs to 391 residues: D-xylose 1-dehydrogenase (NADP(+)) (391 aa).

This sequence belongs to the Gfo/Idh/MocA family.

It carries out the reaction D-xylose + NADP(+) = D-xylono-1,5-lactone + NADPH + H(+). NADP-dependent D-xylose dehydrogenase catalyzing the oxydation of D-xylose into D-xylonolactone. Also displays some, albeit lower activity with D-glucose, D-galactose and L-arabinose as substrate. Probably not involved in D-xylose degradation, as it has been shown that H.jecorina assimilates D-xylose via D-xylose reductase and xylitol dehydrogenase, and it is unable to grow on D-xylonic acid as sole carbon source. May play a role in the regeneration of NADP(+) in the presence of D-xylose. This is D-xylose 1-dehydrogenase (NADP(+)) from Hypocrea jecorina (strain ATCC 56765 / BCRC 32924 / NRRL 11460 / Rut C-30) (Trichoderma reesei).